Consider the following 112-residue polypeptide: METVLQVLLGILGFQAAWVSSQELEQSPQSLIVQEGKNLTINCTSSKTLYGLYWYKQKYGEGLIFLMMLQKGGEEKSHEKITAKLDEKKQQSSLHITASQPSHAGIYLCGAD.

The N-terminal stretch at 1-21 is a signal peptide; the sequence is METVLQVLLGILGFQAAWVSS. The 91-residue stretch at 22–112 folds into the Ig-like domain; the sequence is QELEQSPQSL…HAGIYLCGAD (91 aa). 2 N-linked (GlcNAc...) asparagine glycosylation sites follow: Asn-38 and Asn-42. Cysteines 43 and 109 form a disulfide.

In terms of assembly, alpha-beta TR is a heterodimer composed of an alpha and beta chain; disulfide-linked. The alpha-beta TR is associated with the transmembrane signaling CD3 coreceptor proteins to form the TR-CD3 (TcR or TCR). The assembly of alpha-beta TR heterodimers with CD3 occurs in the endoplasmic reticulum where a single alpha-beta TR heterodimer associates with one CD3D-CD3E heterodimer, one CD3G-CD3E heterodimer and one CD247 homodimer forming a stable octameric structure. CD3D-CD3E and CD3G-CD3E heterodimers preferentially associate with TR alpha and TR beta chains, respectively. The association of the CD247 homodimer is the last step of TcR assembly in the endoplasmic reticulum and is required for transport to the cell surface.

The protein localises to the cell membrane. V region of the variable domain of T cell receptor (TR) alpha chain that participates in the antigen recognition. Alpha-beta T cell receptors are antigen specific receptors which are essential to the immune response and are present on the cell surface of T lymphocytes. Recognize peptide-major histocompatibility (MH) (pMH) complexes that are displayed by antigen presenting cells (APC), a prerequisite for efficient T cell adaptive immunity against pathogens. Binding of alpha-beta TR to pMH complex initiates TR-CD3 clustering on the cell surface and intracellular activation of LCK that phosphorylates the ITAM motifs of CD3G, CD3D, CD3E and CD247 enabling the recruitment of ZAP70. In turn ZAP70 phosphorylates LAT, which recruits numerous signaling molecules to form the LAT signalosome. The LAT signalosome propagates signal branching to three major signaling pathways, the calcium, the mitogen-activated protein kinase (MAPK) kinase and the nuclear factor NF-kappa-B (NF-kB) pathways, leading to the mobilization of transcription factors that are critical for gene expression and essential for T cell growth and differentiation. The T cell repertoire is generated in the thymus, by V-(D)-J rearrangement. This repertoire is then shaped by intrathymic selection events to generate a peripheral T cell pool of self-MH restricted, non-autoaggressive T cells. Post-thymic interaction of alpha-beta TR with the pMH complexes shapes TR structural and functional avidity. The polypeptide is T cell receptor alpha variable 34 (Homo sapiens (Human)).